A 185-amino-acid chain; its full sequence is ADP-ribosylation factor (185 aa).

Gly2 is lipidated: N-myristoyl glycine. GTP-binding positions include 27 to 34 (GLDAAGKT), 70 to 74 (DVGGQ), and 129 to 132 (NKQD).

Belongs to the small GTPase superfamily. Arf family.

The protein localises to the golgi apparatus. In terms of biological role, GTP-binding protein involved in protein trafficking; may modulate vesicle budding and uncoating within the Golgi apparatus. In Neurospora crassa (strain ATCC 24698 / 74-OR23-1A / CBS 708.71 / DSM 1257 / FGSC 987), this protein is ADP-ribosylation factor.